A 575-amino-acid chain; its full sequence is Cytokinin dehydrogenase 1 (575 aa).

An N-terminal signal peptide occupies residues 1–31 (MGLTSSLRFHRQNNKTFLGIFMILVLSCIPG). Residues asparagine 14, asparagine 38, and asparagine 115 are each glycosylated (N-linked (GlcNAc...) asparagine). Residues 84-262 (YQLPPLAILH…TRARISLEPA (179 aa)) enclose the FAD-binding PCMH-type domain. Residues alanine 120, glycine 122, and glycine 124 each contribute to the FAD site. A Pros-8alpha-FAD histidine modification is found at histidine 125. FAD-binding residues include serine 126, glutamine 130, aspartate 186, threonine 191, serine 197, isoleucine 201, and isoleucine 252. N-linked (GlcNAc...) asparagine glycans are attached at residues asparagine 303, asparagine 318, asparagine 437, and asparagine 467. FAD is bound by residues tyrosine 498 and glutamine 536.

The protein belongs to the oxygen-dependent FAD-linked oxidoreductase family. The cofactor is FAD. Expressed in shoot apexes, lateral shoot meristems, growing tissues of young flowers, and weakly at the root-hypocotyl junction.

It localises to the vacuole. It carries out the reaction N(6)-dimethylallyladenine + A + H2O = 3-methyl-2-butenal + adenine + AH2. Functionally, catalyzes the oxidation of cytokinins, a family of N(6)-substituted adenine derivatives that are plant hormones, where the substituent is an isopentenyl group. Catalyzes in vitro the oxidation of various types of cytokinin nucleotides that are known as direct products of cytokinin biosynthesis. Promotes adventitious root initiation downstream of MYC2-dependent jasmonate signaling. Cytokinin degraded by CKX1 is required for cell division in the female gametophyte by modulating the expression of cell cycle genes. The chain is Cytokinin dehydrogenase 1 (CKX1) from Arabidopsis thaliana (Mouse-ear cress).